A 179-amino-acid polypeptide reads, in one-letter code: Large ribosomal subunit protein uL6 (179 aa).

It belongs to the universal ribosomal protein uL6 family. In terms of assembly, part of the 50S ribosomal subunit.

This protein binds to the 23S rRNA, and is important in its secondary structure. It is located near the subunit interface in the base of the L7/L12 stalk, and near the tRNA binding site of the peptidyltransferase center. This chain is Large ribosomal subunit protein uL6, found in Halothermothrix orenii (strain H 168 / OCM 544 / DSM 9562).